The chain runs to 107 residues: U1-lycotoxin-Ls1o (107 aa).

An N-terminal signal peptide occupies residues 1–20 (MMKVLVVVALLVTLISYSSS). The propeptide occupies 21-41 (EGIDDLEADELLSLMANEQTR). 4 disulfides stabilise this stretch: Cys44/Cys59, Cys51/Cys68, Cys58/Cys86, and Cys70/Cys84.

This sequence belongs to the neurotoxin 19 (CSTX) family. 04 (U1-Lctx) subfamily. As to expression, expressed by the venom gland.

The protein resides in the secreted. The chain is U1-lycotoxin-Ls1o from Lycosa singoriensis (Wolf spider).